An 80-amino-acid polypeptide reads, in one-letter code: Sec-independent protein translocase protein TatA (80 aa).

A helical transmembrane segment spans residues 1-21 (MGISMWQLLIVLLIIVLLFGT). The segment at 39-80 (KKAMSDGESEEDKEPKKLSQNESRTIEGSVERNDAKTESKHS) is disordered. Positions 67-80 (SVERNDAKTESKHS) are enriched in basic and acidic residues.

It belongs to the TatA/E family. The Tat system comprises two distinct complexes: a TatABC complex, containing multiple copies of TatA, TatB and TatC subunits, and a separate TatA complex, containing only TatA subunits. Substrates initially bind to the TatABC complex, which probably triggers association of the separate TatA complex to form the active translocon.

It localises to the cell inner membrane. Its function is as follows. Part of the twin-arginine translocation (Tat) system that transports large folded proteins containing a characteristic twin-arginine motif in their signal peptide across membranes. TatA could form the protein-conducting channel of the Tat system. The protein is Sec-independent protein translocase protein TatA of Hahella chejuensis (strain KCTC 2396).